We begin with the raw amino-acid sequence, 1119 residues long: Protein translocase subunit SecA (1119 aa).

ATP-binding positions include glutamine 177, 195–199 (GEGKT), and aspartate 692. A disordered region spans residues 1025–1081 (APSIHEARQTKSKEKVETRKEEIPNMDERAAQSRAAGNTQRQQPEVTETIVRDRPKI). Positions 1029 to 1055 (HEARQTKSKEKVETRKEEIPNMDERAA) are enriched in basic and acidic residues. Polar residues predominate over residues 1059–1070 (AAGNTQRQQPEV).

The protein belongs to the SecA family. In terms of assembly, monomer and homodimer. Part of the essential Sec protein translocation apparatus which comprises SecA, SecYEG and auxiliary proteins SecDF. Other proteins may also be involved.

Its subcellular location is the cell inner membrane. The protein resides in the cytoplasm. The enzyme catalyses ATP + H2O + cellular proteinSide 1 = ADP + phosphate + cellular proteinSide 2.. Functionally, part of the Sec protein translocase complex. Interacts with the SecYEG preprotein conducting channel. Has a central role in coupling the hydrolysis of ATP to the transfer of proteins into and across the cell membrane, serving as an ATP-driven molecular motor driving the stepwise translocation of polypeptide chains across the membrane. The polypeptide is Protein translocase subunit SecA (Christiangramia forsetii (strain DSM 17595 / CGMCC 1.15422 / KT0803) (Gramella forsetii)).